We begin with the raw amino-acid sequence, 524 residues long: Gamma-taxilin (524 aa).

The segment covering 1-10 has biased composition (basic and acidic residues); it reads MATRLEEVTR. Disordered regions lie at residues 1-37 and 64-86; these read MATR…KFEI and LQHQ…DEGS. R12 and R24 each carry omega-N-methylarginine. Residues S79, S86, and S97 each carry the phosphoserine modification. Over residues 106–115 the composition is skewed to basic and acidic residues; sequence REEIPGREAR. The disordered stretch occupies residues 106 to 130; sequence REEIPGREARTGPPDGQQDSECSRN. Positions 153–465 form a coiled coil; the sequence is EEKLAALCKK…KEQVSIKAAD (313 aa). Phosphotyrosine is present on Y283. Residues 501–524 form a disordered region; sequence VCEKSAAQKPSSSGSPAQGIESVD. A Phosphoserine modification is found at S512.

The protein belongs to the taxilin family. Binds to the C-terminal coiled coil region of syntaxin family members STX1A, STX3A and STX4A. Forms a heterodimer with ATF4 in osteoblasts.

It is found in the nucleus membrane. The protein localises to the cytoplasm. It localises to the cytosol. Its function is as follows. May be involved in intracellular vesicle traffic. Inhibits ATF4-mediated transcription, possibly by dimerizing with ATF4 to form inactive dimers that cannot bind DNA. May be involved in regulating bone mass density through an ATF4-dependent pathway. May be involved in cell cycle progression. The chain is Gamma-taxilin (Txlng) from Mus musculus (Mouse).